Reading from the N-terminus, the 1002-residue chain is ATP-dependent DNA helicase MPH1 (1002 aa).

The Helicase ATP-binding domain occupies 108 to 275 (IVRCALFENV…EVVNNLHISK (168 aa)). ATP is bound at residue 121–128 (IPTGTGKT). The short motif at 223–226 (DEAH) is the DEAH box element. One can recognise a Helicase C-terminal domain in the interval 506–669 (DEETYIRKNK…ALEYTKSDRI (164 aa)). A compositionally biased stretch (basic and acidic residues) spans 531–551 (ENRVEEEKKRQKEQAKLERTG). 2 disordered regions span residues 531-569 (ENRV…NQKQ) and 799-843 (AKSQ…DSHT). Over residues 553–568 (RTGSSEEAQLSGMNQK) the composition is skewed to polar residues.

It belongs to the DEAD box helicase family. DEAH subfamily. FANCM sub-subfamily. In terms of assembly, interacts with the MHF histone-fold complex to form the FANCM-MHF complex.

The protein localises to the nucleus. It catalyses the reaction ATP + H2O = ADP + phosphate + H(+). Functionally, ATP-dependent DNA helicase involved in DNA damage repair by homologous recombination and in genome maintenance. Capable of unwinding D-loops. Plays a role in limiting crossover recombinants during mitotic DNA double-strand break (DSB) repair. Component of a FANCM-MHF complex which promotes gene conversion at blocked replication forks, probably by reversal of the stalled fork. The polypeptide is ATP-dependent DNA helicase MPH1 (Kluyveromyces lactis (strain ATCC 8585 / CBS 2359 / DSM 70799 / NBRC 1267 / NRRL Y-1140 / WM37) (Yeast)).